The sequence spans 101 residues: Phosphoribosyl-ATP pyrophosphatase (101 aa).

It belongs to the PRA-PH family.

Its subcellular location is the cytoplasm. It carries out the reaction 1-(5-phospho-beta-D-ribosyl)-ATP + H2O = 1-(5-phospho-beta-D-ribosyl)-5'-AMP + diphosphate + H(+). The protein operates within amino-acid biosynthesis; L-histidine biosynthesis; L-histidine from 5-phospho-alpha-D-ribose 1-diphosphate: step 2/9. This is Phosphoribosyl-ATP pyrophosphatase from Natronomonas pharaonis (strain ATCC 35678 / DSM 2160 / CIP 103997 / JCM 8858 / NBRC 14720 / NCIMB 2260 / Gabara) (Halobacterium pharaonis).